The primary structure comprises 40 residues: Peroxisomal LYS1 stabilizing protein 1 (40 aa).

Residues 1 to 10 are compositionally biased toward polar residues; the sequence is MTAKTKQSWN. Positions 1–20 are disordered; it reads MTAKTKQSWNKGIWENGKQG.

Its subcellular location is the cytoplasm. It is found in the cytosol. It localises to the peroxisome matrix. In terms of biological role, modulates the lysine biosynthesis pathway, possibly by stabilizing the lysine biosynthesis LYS1 protein in lysine-deplete conditions. The chain is Peroxisomal LYS1 stabilizing protein 1 from Saccharomyces cerevisiae (strain ATCC 204508 / S288c) (Baker's yeast).